The chain runs to 705 residues: Kinesin-like protein KIF2A (705 aa).

A globular region spans residues 1–216; the sequence is MATANFGKIQ…LDYRPLTTAD (216 aa). Residues 65–186 are disordered; the sequence is DLVPDEDIEP…QELREKRAQD (122 aa). Serine 75 is subject to Phosphoserine. At threonine 96 the chain carries Phosphothreonine. Residue lysine 101 is modified to N6-acetyllysine. Over residues 122–139 the composition is skewed to polar residues; that stretch reads LPEQSSSAQQNGSVSDIS. Serine 134 and serine 139 each carry phosphoserine. The segment covering 158–186 has biased composition (basic and acidic residues); sequence CVKEVEKLQEKREKRRLQQQELREKRAQD. The region spanning 222 to 552 is the Kinesin motor domain; it reads RICVCVRKRP…LRYANRVKEL (331 aa). ATP is bound at residue 312–319; the sequence is GQTGSGKT. Phosphoserine occurs at positions 528 and 545. The stretch at 659 to 698 forms a coiled coil; sequence ATQLEAILEQKIDILTELRDKVKSFRAALQEEEQASKQIN.

Belongs to the TRAFAC class myosin-kinesin ATPase superfamily. Kinesin family. MCAK/KIF2 subfamily. In terms of assembly, interacts with AURKA and PLK1. Interacts with PSRC1. Interacts with MCRS1; the interaction enhances recruitment of KIF2A to the minus ends of spindle microtubules which promotes chromosome alignment. In terms of tissue distribution, highest level in lung. High level in ovary, moderate levels in heart, kidney, placenta, skeletal muscle and spleen (at protein level). Pancreas and spleen express a shorter isoform (at protein level). Expressed in the flagellum of elongated spermatids and sperm in the testis lumen (at protein level). Isoform 1 expressed in neuronal cells. Isoform 2 expressed in astrocytes and fibroblasts.

It is found in the cytoplasm. Its subcellular location is the cytoskeleton. It localises to the microtubule organizing center. The protein resides in the centrosome. The protein localises to the spindle pole. It is found in the spindle. Its subcellular location is the lysosome. Its function is as follows. Plus end-directed microtubule-dependent motor required for normal brain development. May regulate microtubule dynamics during axonal growth. Required for normal progression through mitosis. Required for normal congress of chromosomes at the metaphase plate. Required for normal spindle dynamics during mitosis. Promotes spindle turnover. Implicated in formation of bipolar mitotic spindles. Has microtubule depolymerization activity. In Mus musculus (Mouse), this protein is Kinesin-like protein KIF2A (Kif2a).